Reading from the N-terminus, the 351-residue chain is Photosystem II D2 protein (351 aa).

Residues 39–59 (TAYLAIGGWLTGTTFVTSWYT) traverse the membrane as a helical segment. Position 116 (His116) interacts with chlorophyll a. The chain crosses the membrane as a helical span at residues 123-139 (GFMLRQFEIARLVGIRP). Pheophytin a is bound by residues Gln128 and Asn141. Residues 151 to 164 (VFVSVFLMYPLGQS) traverse the membrane as a helical segment. His196 serves as a coordination point for chlorophyll a. Residues 206–226 (GALLCAIHGATVENTLFEDGE) traverse the membrane as a helical segment. 2 residues coordinate a plastoquinone: His213 and Phe260. His213 lines the Fe cation pocket. His267 contacts Fe cation. The chain crosses the membrane as a helical span at residues 277-293 (GLWTSSIGIIGLALNLR).

Belongs to the reaction center PufL/M/PsbA/D family. In terms of assembly, PSII is composed of 1 copy each of membrane proteins PsbA, PsbB, PsbC, PsbD, PsbE, PsbF, PsbH, PsbI, PsbJ, PsbK, PsbL, PsbM, PsbT, PsbX, PsbY, PsbZ, Psb30/Ycf12, peripheral proteins PsbO, CyanoQ (PsbQ), PsbU, PsbV and a large number of cofactors. It forms dimeric complexes. The D1/D2 heterodimer binds P680, chlorophylls that are the primary electron donor of PSII, and subsequent electron acceptors. It shares a non-heme iron and each subunit binds pheophytin, quinone, additional chlorophylls, carotenoids and lipids. There is also a Cl(-1) ion associated with D1 and D2, which is required for oxygen evolution. The PSII complex binds additional chlorophylls, carotenoids and specific lipids. serves as cofactor.

It is found in the cellular thylakoid membrane. It catalyses the reaction 2 a plastoquinone + 4 hnu + 2 H2O = 2 a plastoquinol + O2. Its function is as follows. Photosystem II (PSII) is a light-driven water:plastoquinone oxidoreductase that uses light energy to abstract electrons from H(2)O, generating O(2) and a proton gradient subsequently used for ATP formation. It consists of a core antenna complex that captures photons, and an electron transfer chain that converts photonic excitation into a charge separation. The D1/D2 (PsbA/PsbD) reaction center heterodimer binds P680, the primary electron donor of PSII as well as several subsequent electron acceptors. D2 is needed for assembly of a stable PSII complex. This Synechococcus sp. (strain WH7803) protein is Photosystem II D2 protein.